The following is a 185-amino-acid chain: MINDIKKDADARMKKSVEALNANFHKIRTGRAHPSLLDAVTVEYYGSEMPLNQVASVNVEDARTLAVVPWEKSMVPKVEKAIMTSDLGLNPAAAGNVIRVPLPPLTEETRRNYIKQARGEAENARVAVRNVRRDANGDLKSLLKEKEITEDEERHAIDEIQKLTDKYVTEIDKLLETKEHDLLQV.

This sequence belongs to the RRF family.

It is found in the cytoplasm. Functionally, responsible for the release of ribosomes from messenger RNA at the termination of protein biosynthesis. May increase the efficiency of translation by recycling ribosomes from one round of translation to another. The sequence is that of Ribosome-recycling factor from Chromohalobacter salexigens (strain ATCC BAA-138 / DSM 3043 / CIP 106854 / NCIMB 13768 / 1H11).